The primary structure comprises 167 residues: ATP synthase subunit b (167 aa).

A helical membrane pass occupies residues 7-25; the sequence is SFLLAVSFVIFIYLIYRPA.

It belongs to the ATPase B chain family. In terms of assembly, F-type ATPases have 2 components, F(1) - the catalytic core - and F(0) - the membrane proton channel. F(1) has five subunits: alpha(3), beta(3), gamma(1), delta(1), epsilon(1). F(0) has three main subunits: a(1), b(2) and c(10-14). The alpha and beta chains form an alternating ring which encloses part of the gamma chain. F(1) is attached to F(0) by a central stalk formed by the gamma and epsilon chains, while a peripheral stalk is formed by the delta and b chains.

The protein resides in the cell inner membrane. Functionally, f(1)F(0) ATP synthase produces ATP from ADP in the presence of a proton or sodium gradient. F-type ATPases consist of two structural domains, F(1) containing the extramembraneous catalytic core and F(0) containing the membrane proton channel, linked together by a central stalk and a peripheral stalk. During catalysis, ATP synthesis in the catalytic domain of F(1) is coupled via a rotary mechanism of the central stalk subunits to proton translocation. Its function is as follows. Component of the F(0) channel, it forms part of the peripheral stalk, linking F(1) to F(0). In Rickettsia typhi (strain ATCC VR-144 / Wilmington), this protein is ATP synthase subunit b.